A 398-amino-acid polypeptide reads, in one-letter code: Thyrotropin-releasing hormone receptor (398 aa).

Residues 1-28 are Extracellular-facing; that stretch reads MENETGSELNQTQLQPRAVVALEYQVVT. 2 N-linked (GlcNAc...) asparagine glycosylation sites follow: Asn-3 and Asn-10. A helical membrane pass occupies residues 29–51; sequence ILLVLIICGLGIVGNIMVVLVVM. Over 52–61 the chain is Cytoplasmic; sequence RTKHMRTPTN. Residues 62–83 form a helical membrane-spanning segment; that stretch reads CYLVSLAVADLMVLVAAGLPNI. The Extracellular segment spans residues 84-99; it reads TDSIYGSWVYGYVGCL. Cys-98 and Cys-179 are disulfide-bonded. Residues 100-121 form a helical membrane-spanning segment; it reads CITYLQYLGINASSCSITAFTI. Topologically, residues 122 to 144 are cytoplasmic; it reads ERYIAICHPIKAQFLCTFSRAKK. A helical transmembrane segment spans residues 145–168; that stretch reads IIIFVWAFTSIYCMLWFFLLDLNI. At 169–193 the chain is on the extracellular side; sequence STYKDAIVVSCGYKISRNYYSPIYL. A helical membrane pass occupies residues 194 to 215; it reads MDFGVFYVVPMILATVLYGFIA. Topologically, residues 216-266 are cytoplasmic; it reads RILFLSPIPSDPKENSNTWKNDSTHQNKNLNSKTSNRYFNSTVSSRKQVTK. A helical transmembrane segment spans residues 267-288; sequence MLAVVVILFALLWMPYRTLVVV. The Extracellular portion of the chain corresponds to 289–296; that stretch reads NSFLSSPF. Residues 297–319 traverse the membrane as a helical segment; the sequence is QENWFLLFCRICIYLNSAINPVI. Residues 320–398 are Cytoplasmic-facing; sequence YNLMSQKFRA…LASEVTFSQS (79 aa).

The protein belongs to the G-protein coupled receptor 1 family.

It localises to the cell membrane. In terms of biological role, receptor for thyrotropin-releasing hormone (TRH). Upon ligand binding, this G-protein-coupled receptor triggers activation of the phosphatidylinositol (IP3)-calcium-protein kinase C (PKC) pathway. The sequence is that of Thyrotropin-releasing hormone receptor (TRHR) from Ovis aries (Sheep).